A 490-amino-acid polypeptide reads, in one-letter code: Protein nucleotidyltransferase YdiU (490 aa).

Positions 89, 91, 92, 112, 124, 125, 175, and 182 each coordinate ATP. Catalysis depends on D251, which acts as the Proton acceptor. Mg(2+) is bound by residues N252 and D261. D261 is a binding site for ATP.

Belongs to the SELO family. The cofactor is Mg(2+). Requires Mn(2+) as cofactor.

The catalysed reaction is L-seryl-[protein] + ATP = 3-O-(5'-adenylyl)-L-seryl-[protein] + diphosphate. It catalyses the reaction L-threonyl-[protein] + ATP = 3-O-(5'-adenylyl)-L-threonyl-[protein] + diphosphate. The enzyme catalyses L-tyrosyl-[protein] + ATP = O-(5'-adenylyl)-L-tyrosyl-[protein] + diphosphate. It carries out the reaction L-histidyl-[protein] + UTP = N(tele)-(5'-uridylyl)-L-histidyl-[protein] + diphosphate. The catalysed reaction is L-seryl-[protein] + UTP = O-(5'-uridylyl)-L-seryl-[protein] + diphosphate. It catalyses the reaction L-tyrosyl-[protein] + UTP = O-(5'-uridylyl)-L-tyrosyl-[protein] + diphosphate. In terms of biological role, nucleotidyltransferase involved in the post-translational modification of proteins. It can catalyze the addition of adenosine monophosphate (AMP) or uridine monophosphate (UMP) to a protein, resulting in modifications known as AMPylation and UMPylation. The protein is Protein nucleotidyltransferase YdiU of Vibrio vulnificus (strain YJ016).